The sequence spans 181 residues: Inorganic pyrophosphatase (181 aa).

Residues lysine 16, arginine 30, and tyrosine 42 each coordinate substrate. Mg(2+) is bound by residues aspartate 52, aspartate 57, and aspartate 89. Tyrosine 126 contacts substrate.

Belongs to the PPase family. Homohexamer. Mg(2+) is required as a cofactor.

It is found in the cytoplasm. The enzyme catalyses diphosphate + H2O = 2 phosphate + H(+). In terms of biological role, catalyzes the hydrolysis of inorganic pyrophosphate (PPi) forming two phosphate ions. This Ureaplasma parvum serovar 3 (strain ATCC 700970) protein is Inorganic pyrophosphatase.